We begin with the raw amino-acid sequence, 394 residues long: NAD(P)H-quinone oxidoreductase subunit H (394 aa).

It belongs to the complex I 49 kDa subunit family. In terms of assembly, NDH-1 can be composed of about 15 different subunits; different subcomplexes with different compositions have been identified which probably have different functions.

The protein localises to the cellular thylakoid membrane. It catalyses the reaction a plastoquinone + NADH + (n+1) H(+)(in) = a plastoquinol + NAD(+) + n H(+)(out). The enzyme catalyses a plastoquinone + NADPH + (n+1) H(+)(in) = a plastoquinol + NADP(+) + n H(+)(out). In terms of biological role, NDH-1 shuttles electrons from an unknown electron donor, via FMN and iron-sulfur (Fe-S) centers, to quinones in the respiratory and/or the photosynthetic chain. The immediate electron acceptor for the enzyme in this species is believed to be plastoquinone. Couples the redox reaction to proton translocation, and thus conserves the redox energy in a proton gradient. Cyanobacterial NDH-1 also plays a role in inorganic carbon-concentration. The sequence is that of NAD(P)H-quinone oxidoreductase subunit H from Prochlorococcus marinus (strain SARG / CCMP1375 / SS120).